The sequence spans 337 residues: DNA-directed RNA polymerase subunit alpha (337 aa).

The tract at residues methionine 1–lysine 233 is alpha N-terminal domain (alpha-NTD). Positions phenylalanine 249–tyrosine 337 are alpha C-terminal domain (alpha-CTD).

It belongs to the RNA polymerase alpha chain family. Homodimer. The RNAP catalytic core consists of 2 alpha, 1 beta, 1 beta' and 1 omega subunit. When a sigma factor is associated with the core the holoenzyme is formed, which can initiate transcription.

The enzyme catalyses RNA(n) + a ribonucleoside 5'-triphosphate = RNA(n+1) + diphosphate. DNA-dependent RNA polymerase catalyzes the transcription of DNA into RNA using the four ribonucleoside triphosphates as substrates. This is DNA-directed RNA polymerase subunit alpha from Bartonella henselae (strain ATCC 49882 / DSM 28221 / CCUG 30454 / Houston 1) (Rochalimaea henselae).